The chain runs to 72 residues: uncharacterized protein (72 aa).

Residues 23–45 (ITNLLITTILLCFFNATTYWKLF) form a helical membrane-spanning segment.

Its subcellular location is the membrane. This is an uncharacterized protein from Schizosaccharomyces pombe (strain 972 / ATCC 24843) (Fission yeast).